A 150-amino-acid chain; its full sequence is Large ribosomal subunit protein bL9 (150 aa).

This sequence belongs to the bacterial ribosomal protein bL9 family.

In terms of biological role, binds to the 23S rRNA. In Renibacterium salmoninarum (strain ATCC 33209 / DSM 20767 / JCM 11484 / NBRC 15589 / NCIMB 2235), this protein is Large ribosomal subunit protein bL9.